The primary structure comprises 61 residues: MPTTRQCSFCGHEIPPGTGLMYVRNDGTILWFCSSKCRKSMLKYHRDPKKYKWTTRYMKVR.

Positions 7, 10, 33, and 37 each coordinate Zn(2+). The segment at 7-37 adopts a C4-type zinc-finger fold; it reads CSFCGHEIPPGTGLMYVRNDGTILWFCSSKC.

Belongs to the eukaryotic ribosomal protein eL24 family. Part of the 50S ribosomal subunit. Forms a cluster with proteins L3 and L14. Zn(2+) serves as cofactor.

Its function is as follows. Binds to the 23S rRNA. The sequence is that of Large ribosomal subunit protein eL24 from Saccharolobus islandicus (strain Y.N.15.51 / Yellowstone #2) (Sulfolobus islandicus).